The chain runs to 537 residues: O-phosphoserine--tRNA(Cys) ligase (537 aa).

Substrate contacts are provided by residues 186–188 (HMT), 231–233 (SAS), 273–274 (YY), and N317.

It belongs to the class-II aminoacyl-tRNA synthetase family. O-phosphoseryl-tRNA(Cys) synthetase subfamily. Homotetramer. Interacts with SepCysS.

It catalyses the reaction tRNA(Cys) + O-phospho-L-serine + ATP = O-phospho-L-seryl-tRNA(Cys) + AMP + diphosphate. Its function is as follows. Catalyzes the attachment of O-phosphoserine (Sep) to tRNA(Cys). In Methanococcus vannielii (strain ATCC 35089 / DSM 1224 / JCM 13029 / OCM 148 / SB), this protein is O-phosphoserine--tRNA(Cys) ligase.